A 119-amino-acid chain; its full sequence is Small ribosomal subunit protein uS10 (119 aa).

A2 is subject to N-acetylalanine. K4 participates in a covalent cross-link: Glycyl lysine isopeptide (Lys-Gly) (interchain with G-Cter in ubiquitin). K8 carries the post-translational modification N6-succinyllysine; alternate. A Glycyl lysine isopeptide (Lys-Gly) (interchain with G-Cter in ubiquitin); alternate cross-link involves residue K8. The residue at position 9 (T9) is a Phosphothreonine. N6-acetyllysine is present on residues K34 and K75. At S93 the chain carries Phosphoserine.

Belongs to the universal ribosomal protein uS10 family. Component of the 40S small ribosomal subunit. Polyubiquitinated by ZNF598 via 'Lys-63'-linked ubiquitin chains when a ribosome has stalled, initiating the ribosome quality control (RQC) pathway to degrade the potentially detrimental aberrant nascent polypeptide. Deubiquitinated by OTUD3 and USP21, antagonizing ZNF598 activity. In terms of processing, ufmylated by UFL1.

It is found in the cytoplasm. Component of the small ribosomal subunit. The ribosome is a large ribonucleoprotein complex responsible for the synthesis of proteins in the cell. The polypeptide is Small ribosomal subunit protein uS10 (RPS20) (Pongo abelii (Sumatran orangutan)).